We begin with the raw amino-acid sequence, 340 residues long: DnaJ homolog subfamily C member 22 (340 aa).

Positions 1 to 50 constitute a TM2 domain; the sequence is MGKSLLAAYGLWALGGPLGLYHIYLGRDSHALLWMLTLGGFGMGWMWDFW. Helical transmembrane passes span 5 to 25, 30 to 50, 81 to 101, 105 to 125, 135 to 155, 186 to 206, and 212 to 232; these read LLAA…HIYL, HALL…WDFW, FIGQ…GLSF, FHMV…ATVG, LIAA…MIPI, IGLV…LNTS, and VAGS…ISAL. The J domain occupies 278 to 340; the sequence is MACKVLGVNF…LMRLRKSKTL (63 aa).

It is found in the membrane. May function as a co-chaperone. The protein is DnaJ homolog subfamily C member 22 (dnajc22) of Xenopus tropicalis (Western clawed frog).